A 283-amino-acid chain; its full sequence is Probable protein phosphatase 2C 58 (283 aa).

The PPM-type phosphatase domain maps to 35 to 282 (THGFHCVKGK…DDISCIVVKF (248 aa)). Positions 72, 73, 234, and 273 each coordinate Mn(2+).

The protein belongs to the PP2C family. The cofactor is Mg(2+). Requires Mn(2+) as cofactor.

The catalysed reaction is O-phospho-L-seryl-[protein] + H2O = L-seryl-[protein] + phosphate. The enzyme catalyses O-phospho-L-threonyl-[protein] + H2O = L-threonyl-[protein] + phosphate. The chain is Probable protein phosphatase 2C 58 from Arabidopsis thaliana (Mouse-ear cress).